The sequence spans 1650 residues: Phosphatidylinositol 3,4,5-trisphosphate-dependent Rac exchanger 1 protein (1650 aa).

Positions 1–19 (MEAPGSGGGDGGGDPGGDG) are enriched in gly residues. Residues 1 to 33 (MEAPGSGGGDGGGDPGGDGAHPDARGPVSGPCA) form a disordered region. In terms of domain architecture, DH spans 44-235 (LRLCVLNEIL…KTVCSNINET (192 aa)). A PH domain is found at 266–387 (ELLLQGNLLK…WLDALIRERE (122 aa)). Position 314 is a phosphoserine (S314). 2 consecutive DEP domains span residues 416–491 (MSKK…RFRY) and 518–592 (SLYA…RFHA). A PDZ domain is found at 620 to 698 (RLLIPPQEDD…SRRPLRLLVA (79 aa)). Positions 793–813 (ARASQGAPDEDPQEDDQPDSA) are disordered. Positions 800–810 (PDEDPQEDDQP) are enriched in acidic residues. S991 is subject to Phosphoserine. Disordered regions lie at residues 1022–1047 (SPAV…GAPS) and 1099–1129 (PTSA…EVDR). Positions 1030-1047 (QGQGLNDSSYGSASGAPS) are enriched in polar residues. Residues 1109–1122 (PSLVEETSSSPPVS) are compositionally biased toward low complexity. Phosphoserine occurs at positions 1186 and 1191.

Interacts preferentially with RAC2. Interacts with RAC1. Interacts with AUTS2.

Its subcellular location is the cytoplasm. The protein localises to the cytosol. It is found in the cell membrane. Functions as a RAC guanine nucleotide exchange factor (GEF), which activates the Rac proteins by exchanging bound GDP for free GTP. Its activity is synergistically activated by phosphatidylinositol 3,4,5-trisphosphate and the beta gamma subunits of heterotrimeric G protein. May function downstream of heterotrimeric G proteins in neutrophils. The polypeptide is Phosphatidylinositol 3,4,5-trisphosphate-dependent Rac exchanger 1 protein (Prex1) (Mus musculus (Mouse)).